Consider the following 96-residue polypeptide: Protein RnfH (96 aa).

The protein belongs to the UPF0125 (RnfH) family.

This chain is Protein RnfH, found in Pectobacterium carotovorum subsp. carotovorum (strain PC1).